A 335-amino-acid chain; its full sequence is Probable UDP-N-acetylglucosamine pyrophosphorylase (335 aa).

The short motif at 45-48 (LSGG) is the Substrate binding element. UTP contacts are provided by residues 45–48 (LSGG), Lys-59, Gln-120, and Gly-145. Asn-146 is a substrate binding site. Residue Asp-170 participates in UTP binding. A Substrate binding motif is present at residues 218-219 (EY). Lys-278 contacts UTP. Residue Lys-308 participates in substrate binding.

The protein belongs to the UDPGP type 1 family.

It is found in the cytoplasm. The catalysed reaction is N-acetyl-alpha-D-glucosamine 1-phosphate + UTP + H(+) = UDP-N-acetyl-alpha-D-glucosamine + diphosphate. It participates in nucleotide-sugar biosynthesis; UDP-N-acetyl-alpha-D-glucosamine biosynthesis; UDP-N-acetyl-alpha-D-glucosamine from N-acetyl-alpha-D-glucosamine 1-phosphate: step 1/1. The protein is Probable UDP-N-acetylglucosamine pyrophosphorylase (UAP1) of Encephalitozoon cuniculi (strain GB-M1) (Microsporidian parasite).